The sequence spans 117 residues: DNA-directed RNA polymerase subunit omega (117 aa).

This sequence belongs to the RNA polymerase subunit omega family. As to quaternary structure, the RNAP catalytic core consists of 2 alpha, 1 beta, 1 beta' and 1 omega subunit. When a sigma factor is associated with the core the holoenzyme is formed, which can initiate transcription.

It catalyses the reaction RNA(n) + a ribonucleoside 5'-triphosphate = RNA(n+1) + diphosphate. Its function is as follows. Promotes RNA polymerase assembly. Latches the N- and C-terminal regions of the beta' subunit thereby facilitating its interaction with the beta and alpha subunits. This Cereibacter sphaeroides (strain ATCC 17029 / ATH 2.4.9) (Rhodobacter sphaeroides) protein is DNA-directed RNA polymerase subunit omega.